Consider the following 318-residue polypeptide: Ribose-phosphate pyrophosphokinase 1 (318 aa).

96–101 (RQDKKD) contributes to the ATP binding site. The Mg(2+) site is built by Asp-128, His-130, Asp-139, and Asp-143. His-130 serves as a coordination point for ATP. Residues 212 to 227 (KDRVAILVDDMADTCG) are binding of phosphoribosylpyrophosphate.

This sequence belongs to the ribose-phosphate pyrophosphokinase family. Homodimer. The active form is probably a hexamer composed of 3 homodimers. Mg(2+) is required as a cofactor.

The enzyme catalyses D-ribose 5-phosphate + ATP = 5-phospho-alpha-D-ribose 1-diphosphate + AMP + H(+). It participates in metabolic intermediate biosynthesis; 5-phospho-alpha-D-ribose 1-diphosphate biosynthesis; 5-phospho-alpha-D-ribose 1-diphosphate from D-ribose 5-phosphate (route I): step 1/1. With respect to regulation, activated by magnesium and inorganic phosphate. Catalyzes the synthesis of phosphoribosylpyrophosphate (PRPP) that is essential for nucleotide synthesis. The chain is Ribose-phosphate pyrophosphokinase 1 (PRPS1) from Bos taurus (Bovine).